The following is a 139-amino-acid chain: D-ribose pyranase (139 aa).

Catalysis depends on histidine 20, which acts as the Proton donor. Substrate-binding positions include aspartate 28, histidine 106, and 128 to 130; that span reads YAN.

The protein belongs to the RbsD / FucU family. RbsD subfamily. In terms of assembly, homodecamer.

Its subcellular location is the cytoplasm. It catalyses the reaction beta-D-ribopyranose = beta-D-ribofuranose. It participates in carbohydrate metabolism; D-ribose degradation; D-ribose 5-phosphate from beta-D-ribopyranose: step 1/2. Catalyzes the interconversion of beta-pyran and beta-furan forms of D-ribose. This chain is D-ribose pyranase, found in Photorhabdus laumondii subsp. laumondii (strain DSM 15139 / CIP 105565 / TT01) (Photorhabdus luminescens subsp. laumondii).